The sequence spans 144 residues: D-aminoacyl-tRNA deacylase (144 aa).

Positions 136–137 (GP) match the Gly-cisPro motif, important for rejection of L-amino acids motif.

Belongs to the DTD family. In terms of assembly, homodimer.

The protein localises to the cytoplasm. It carries out the reaction glycyl-tRNA(Ala) + H2O = tRNA(Ala) + glycine + H(+). The enzyme catalyses a D-aminoacyl-tRNA + H2O = a tRNA + a D-alpha-amino acid + H(+). Its function is as follows. An aminoacyl-tRNA editing enzyme that deacylates mischarged D-aminoacyl-tRNAs. Also deacylates mischarged glycyl-tRNA(Ala), protecting cells against glycine mischarging by AlaRS. Acts via tRNA-based rather than protein-based catalysis; rejects L-amino acids rather than detecting D-amino acids in the active site. By recycling D-aminoacyl-tRNA to D-amino acids and free tRNA molecules, this enzyme counteracts the toxicity associated with the formation of D-aminoacyl-tRNA entities in vivo and helps enforce protein L-homochirality. This is D-aminoacyl-tRNA deacylase from Histophilus somni (strain 129Pt) (Haemophilus somnus).